The following is a 189-amino-acid chain: MVKMIVGLGNPGSKYQQTKHNVGFMAVDRLVKDLDISFTEDKAFKALVGSAFINQEKIYFVKPTTFMNNSGLAVRALLTYYNISTKDLMVIYDDLDMAVGKIRLRQKGSAGGHNGIKSIIAHIGTQEFDRVKIGIGRPSHGMSVINHVLGKFDTDDMITINIALDKVDKAINYYLQEKSIEKTMQQFNG.

Y15 is a tRNA binding site. H20 (proton acceptor) is an active-site residue. Positions 66, 68, and 114 each coordinate tRNA.

This sequence belongs to the PTH family. Monomer.

It localises to the cytoplasm. It carries out the reaction an N-acyl-L-alpha-aminoacyl-tRNA + H2O = an N-acyl-L-amino acid + a tRNA + H(+). Its function is as follows. Hydrolyzes ribosome-free peptidyl-tRNAs (with 1 or more amino acids incorporated), which drop off the ribosome during protein synthesis, or as a result of ribosome stalling. Catalyzes the release of premature peptidyl moieties from peptidyl-tRNA molecules trapped in stalled 50S ribosomal subunits, and thus maintains levels of free tRNAs and 50S ribosomes. The sequence is that of Peptidyl-tRNA hydrolase from Streptococcus equi subsp. zooepidemicus (strain MGCS10565).